We begin with the raw amino-acid sequence, 287 residues long: Shikimate kinase (287 aa).

87–97 (PLASGLKSSSA) serves as a coordination point for ATP.

It belongs to the GHMP kinase family. Archaeal shikimate kinase subfamily.

Its subcellular location is the cytoplasm. It catalyses the reaction shikimate + ATP = 3-phosphoshikimate + ADP + H(+). Its pathway is metabolic intermediate biosynthesis; chorismate biosynthesis; chorismate from D-erythrose 4-phosphate and phosphoenolpyruvate: step 5/7. This Methanococcoides burtonii (strain DSM 6242 / NBRC 107633 / OCM 468 / ACE-M) protein is Shikimate kinase.